Here is a 129-residue protein sequence, read N- to C-terminus: Small ribosomal subunit protein uS11 (129 aa).

It belongs to the universal ribosomal protein uS11 family. Part of the 30S ribosomal subunit. Interacts with proteins S7 and S18. Binds to IF-3.

In terms of biological role, located on the platform of the 30S subunit, it bridges several disparate RNA helices of the 16S rRNA. Forms part of the Shine-Dalgarno cleft in the 70S ribosome. This Lactobacillus delbrueckii subsp. bulgaricus (strain ATCC 11842 / DSM 20081 / BCRC 10696 / JCM 1002 / NBRC 13953 / NCIMB 11778 / NCTC 12712 / WDCM 00102 / Lb 14) protein is Small ribosomal subunit protein uS11.